Reading from the N-terminus, the 133-residue chain is Protein FwdD (133 aa).

The sequence is that of Protein FwdD (fwdD) from Methanocaldococcus jannaschii (strain ATCC 43067 / DSM 2661 / JAL-1 / JCM 10045 / NBRC 100440) (Methanococcus jannaschii).